We begin with the raw amino-acid sequence, 4690 residues long: Nonribosomal peptide synthetase sidN (4690 aa).

The interval Ala-238–Lys-656 is adenylation 1. The 78-residue stretch at Ser-779–Leu-856 folds into the Carrier 1 domain. Ser-816 carries the post-translational modification O-(pantetheine 4'-phosphoryl)serine. The condensation 1 stretch occupies residues Ala-924–Phe-1175. An adenylation 2 region spans residues Glu-1349 to Arg-1760. Positions Pro-1889–Arg-1965 constitute a Carrier 2 domain. Ser-1926 bears the O-(pantetheine 4'-phosphoryl)serine mark. The condensation 2 stretch occupies residues Pro-2001–Val-2285. Residues Thr-2464–Arg-2869 are adenylation 3. One can recognise a Carrier 3 domain in the interval Arg-3002–Lys-3079. Ser-3040 is subject to O-(pantetheine 4'-phosphoryl)serine. The segment at Cys-3121–Thr-3530 is condensation 3. The Carrier 4 domain occupies Ser-3564–Ser-3637. Residue Ser-3598 is modified to O-(pantetheine 4'-phosphoryl)serine. Positions Val-3679–Glu-4087 are condensation 4. Residues Ser-4119–Ser-4195 enclose the Carrier 5 domain. Position 4156 is an O-(pantetheine 4'-phosphoryl)serine (Ser-4156). The tract at residues Trp-4262–Asn-4589 is condensation 5.

It belongs to the NRP synthetase family.

Its pathway is siderophore biosynthesis. Functionally, nonribosomal peptide synthetase required for the biosynthetis of epichloenin A, an extracellular siderophore that plays a crucial role in endophyte-grass symbioses. SidN assembles epichloenin A by activating and incorporating three trans-anhydromevalonylhydroxyornithine (trans-AMHO), 1 glutamine and 4 glycine moieties. Trans-AMHO is produced from L-ornithine via 2 steps involving a L-ornithine N(5)-monooxygenase and an AHMO-N(5)-transacylase that have still to be identified. The third adenylation domain (A3) of sidN incorporates the hydroxamate groups of the siderophore which forms an octahedral iron complex. The other component amino acids are assembled by sidN adenylation domains A1 and A2. The sequence is that of Nonribosomal peptide synthetase sidN from Epichloe festucae (strain Fl1).